The sequence spans 353 residues: Peroxidase 34 (353 aa).

A signal peptide spans 1 to 30 (MHFSSSSTSSTWTILITLGCLMLHASLSAA). The residue at position 31 (glutamine 31) is a Pyrrolidone carboxylic acid. 4 cysteine pairs are disulfide-bonded: cysteine 41-cysteine 121, cysteine 74-cysteine 79, cysteine 127-cysteine 331, and cysteine 207-cysteine 239. N-linked (GlcNAc...) asparagine glycosylation occurs at asparagine 43. Histidine 72 functions as the Proton acceptor in the catalytic mechanism. Residues aspartate 73, valine 76, glycine 78, aspartate 80, and serine 82 each coordinate Ca(2+). An N-linked (GlcNAc...) asparagine glycan is attached at asparagine 87. Proline 169 is a binding site for substrate. Histidine 200 lines the heme b pocket. Threonine 201 provides a ligand contact to Ca(2+). N-linked (GlcNAc...) asparagine glycosylation is found at asparagine 216, asparagine 228, and asparagine 244. Positions 252, 255, and 260 each coordinate Ca(2+). Residue asparagine 285 is glycosylated (N-linked (GlcNAc...) asparagine).

It belongs to the peroxidase family. Classical plant (class III) peroxidase subfamily. The cofactor is heme b. Ca(2+) is required as a cofactor. In terms of tissue distribution, preferentially expressed in roots, but also detected in flowers, leaves and stems.

Its subcellular location is the secreted. The protein localises to the vacuole. It carries out the reaction 2 a phenolic donor + H2O2 = 2 a phenolic radical donor + 2 H2O. Its function is as follows. Removal of H(2)O(2), oxidation of toxic reductants, biosynthesis and degradation of lignin, suberization, auxin catabolism, response to environmental stresses such as wounding, pathogen attack and oxidative stress. These functions might be dependent on each isozyme/isoform in each plant tissue. Functionally, may be implicated in the systemic acquired resistance response via the salicylic acid signal transduction pathway. Exhibits a Ca(2+)-pectate binding affinity which could be interpreted in vivo as a specificity to interact with the pectic structure of the cell wall. In Arabidopsis thaliana (Mouse-ear cress), this protein is Peroxidase 34 (PER34).